Here is a 259-residue protein sequence, read N- to C-terminus: Pimeloyl-[acyl-carrier protein] methyl ester esterase (259 aa).

Residues 16-241 form the AB hydrolase-1 domain; sequence FVMLHGWGMN…QSAHVPFISH (226 aa). Substrate-binding positions include tryptophan 22, 82–83, and 143–147; these read SM and FLLLQ. The Nucleophile role is filled by serine 82. Residues aspartate 207 and histidine 235 contribute to the active site. Histidine 235 serves as a coordination point for substrate.

Belongs to the AB hydrolase superfamily. Carboxylesterase BioH family. Monomer.

It is found in the cytoplasm. It carries out the reaction 6-carboxyhexanoyl-[ACP] methyl ester + H2O = 6-carboxyhexanoyl-[ACP] + methanol + H(+). It participates in cofactor biosynthesis; biotin biosynthesis. Its function is as follows. The physiological role of BioH is to remove the methyl group introduced by BioC when the pimeloyl moiety is complete. It allows to synthesize pimeloyl-ACP via the fatty acid synthetic pathway through the hydrolysis of the ester bonds of pimeloyl-ACP esters. This Hamiltonella defensa subsp. Acyrthosiphon pisum (strain 5AT) protein is Pimeloyl-[acyl-carrier protein] methyl ester esterase.